A 751-amino-acid chain; its full sequence is FAD-dependent monooxygenase atnA (751 aa).

Residues 8-28 (LIVGGGVAGLSLAIMLEAYGF) traverse the membrane as a helical segment. FAD is bound by residues E34, G48, and R109. The active site involves Y218. Positions 311 and 324 each coordinate FAD. The next 8 membrane-spanning stretches (helical) occupy residues 446–466 (PLATISWIVFLTLAACFPWSV), 481–501 (SEVFQLYTSVMAVSISGLWVI), 508–528 (LLISPMFSSLPWILASNYWGW), 563–583 (ALLPCLAMAYSIPGILTALAS), 590–610 (DWWPVAHCTFPVLVYVSSTFL), 639–659 (IAVVSSAVHVTLIWNHGAALL), 663–683 (IISLLSVPLARTLASLTALIV), and 706–726 (AWAVILVSTVLLGPAASLAGA).

This sequence belongs to the paxM FAD-dependent monooxygenase family. It depends on FAD as a cofactor.

It localises to the membrane. Its pathway is secondary metabolite biosynthesis; terpenoid biosynthesis. Functionally, FAD-dependent monooxygenase; part of the gene cluster that mediates the biosynthesis of the meroterpenoids arthripenoids. The pathway begins with the HR-PKS atnH that catalyzes two chain-extension steps to form a reduced triketide, which then primes the SAT domain in the NR-PKS atnG to initiate three more cycles of extension to give a linear hexaketide corresponding to the polyketide part of arthripenoids. The FAD-dependent monooxygenase atnJ then performs an oxidative decarboxylation at C11 of the atnH/atnG product, via an electrophilic aromatic hydroxylation with concomitant ipso-decarboxylation. The membrane-bound polyprenyl transferase atnF then introduces a farnesyl group before the FAD-dependent monooxygenase atnK functions as the first epoxidase on terminal C12'-C13' olefin, followed by a second epoxidation on C7'-C8' catalyzed by atnA. The terpene cyclase/mutase atnI then initiates the sequential tricyclic ring formation through protonation of the terminal epoxide and catalyzes the regioselective and stereoselective 6/6/6-tricyclic ring formation. The cytochrome P450 monooxygenase atnM is responsible for hydroxylating both C1' and C10'. The next steps may involve ketoreduction and acetyl transfer by the ketoreductase atnB and the acetyltransferase atnC, and lead to the production of arthripenoid B, the final biosynthetic product of the atn cluster. The hydroquinone moiety in arthripenoid B is prone to undergo spontaneous oxidation to afford a benzoquinone compound, a key intermediate for generating structure diversity. For instance, addition of a cysteine followed by ring contraction gives arthripenoid A, tautomerization gives the main product arthripenoid C, addition of a molecular of water or amine affords arthripenoid D or E, respectively, and loss of one water forms arthripenoid F. This is FAD-dependent monooxygenase atnA from Arthrinium sp.